A 511-amino-acid polypeptide reads, in one-letter code: Glucans biosynthesis protein G (511 aa).

Residues 1 to 22 (MMKMRWLGAAIMLTLYASSSWA) form the signal peptide.

The protein belongs to the OpgD/OpgG family.

It is found in the periplasm. The protein operates within glycan metabolism; osmoregulated periplasmic glucan (OPG) biosynthesis. In terms of biological role, involved in the biosynthesis of osmoregulated periplasmic glucans (OPGs). In Salmonella enteritidis PT4 (strain P125109), this protein is Glucans biosynthesis protein G.